The primary structure comprises 157 residues: Ribosome maturation factor RimP (157 aa).

This sequence belongs to the RimP family.

It is found in the cytoplasm. Functionally, required for maturation of 30S ribosomal subunits. The polypeptide is Ribosome maturation factor RimP (Bacillus pumilus (strain SAFR-032)).